Reading from the N-terminus, the 122-residue chain is S-protein homolog 23 (122 aa).

Positions 1 to 20 are cleaved as a signal peptide; it reads MQNLSILLVCSFCILGHVSS. The N-linked (GlcNAc...) asparagine glycan is linked to Asn86.

It belongs to the plant self-incompatibility (S1) protein family.

Its subcellular location is the secreted. The chain is S-protein homolog 23 from Arabidopsis thaliana (Mouse-ear cress).